The primary structure comprises 368 residues: WD repeat-containing protein wdr-5.1 (368 aa).

The tract at residues 1-64 (MDPAQNQPNT…APTTSQESTI (64 aa)) is disordered. The span at 16–42 (PAVEEAQGVNNSEAEAPAPAALSSVSP) shows a compositional bias: low complexity. 7 WD repeats span residues 77–116 (GHTK…CERT), 119–158 (GHKL…MAKT), 161–200 (GHTN…CVKT), 203–242 (AHSD…CVKT), 246–285 (DENP…TLKQ), 288–330 (GHEN…VVQS), and 333–368 (GHTQ…RSDS).

This is WD repeat-containing protein wdr-5.1 from Caenorhabditis briggsae.